Reading from the N-terminus, the 156-residue chain is Terrestric acid biosynthesis cluster protein E (156 aa).

It participates in secondary metabolite biosynthesis. In terms of biological role, part of the tra gene cluster that produces terrestric acid. The clavatol biosynthesis cluster cla and the terrestric acid cluster tra are both involved in the production of peniphenones and penilactones. The non-reducing PKS claF is responsible for the formation of clavatol from successive condensations of 3 malonyl-CoA units, presumably with a simple acetyl-CoA starter unit, and 2 methylation steps. The esterase claE probably collaborates with claF by catalyzing the hydrolysis of ACP-bound acyl intermediates to free the ACP from stalled intermediates. The clavatol oxidase claD then converts clavatol to hydroxyclavatol. Spontaneous dehydration of hydroxyclavatol leads to the accumulation of the highly active ortho-quinone methide. On the other hand, the PKS-NRPS hybrid traA is involved in the formation of crustosic acid, with the help of traB and traD. The polyketide synthase module (PKS) of traA is responsible for the synthesis of the polyketide backbone via the condensation of an acetyl-CoA starter unit with 3 malonyl-CoA units. The downstream nonribosomal peptide synthetase (NRPS) module then amidates the carboxyl end of the polyketide with L-malic acid. Because traA lacks a designated enoylreductase (ER) domain, the required activity is provided the enoyl reductase traG. Crustosic acid undergoes decarboxylation and isomerization to the terrestric acid, catalyzed by the 2-oxoglutarate-dependent dioxygenase traH. Both acids are further converted to the 2 gamma-butyrolactones (R)-5-methyltetronic acid and (S)-5-carboxylmethyltetronic acid, with involvement of the cytochrome P450 monooxygenase claJ. Spontaneous addition of the methide to these gamma-butyrolactones leads to peniphenone D and penilactone D, which undergo again stereospecific attacking by methide to give penilactones A and B. TraE seems not to be involved in the biosynthesis of peniphenones and penilactones in the conditions used to study its function. This is Terrestric acid biosynthesis cluster protein E from Penicillium crustosum (Blue mold fungus).